We begin with the raw amino-acid sequence, 66 residues long: Beta-toxin Ct71 (66 aa).

Residues 1–66 (KEGYIVNYHD…VWPLPKKTCN (66 aa)) enclose the LCN-type CS-alpha/beta domain. Disulfide bonds link cysteine 12–cysteine 65, cysteine 16–cysteine 41, cysteine 25–cysteine 46, and cysteine 29–cysteine 48. Asparagine 66 bears the Asparagine amide mark.

Belongs to the long (4 C-C) scorpion toxin superfamily. Sodium channel inhibitor family. Beta subfamily. As to expression, expressed by the venom gland.

The protein resides in the secreted. Functionally, beta toxins bind voltage-independently at site-4 of sodium channels (Nav) and shift the voltage of activation toward more negative potentials thereby affecting sodium channel activation and promoting spontaneous and repetitive firing. Lethal to mice. The sequence is that of Beta-toxin Ct71 from Centruroides tecomanus (Scorpion).